Reading from the N-terminus, the 131-residue chain is Large ribosomal subunit protein bL17 (131 aa).

Belongs to the bacterial ribosomal protein bL17 family. In terms of assembly, part of the 50S ribosomal subunit. Contacts protein L32.

The protein is Large ribosomal subunit protein bL17 of Shewanella oneidensis (strain ATCC 700550 / JCM 31522 / CIP 106686 / LMG 19005 / NCIMB 14063 / MR-1).